The primary structure comprises 302 residues: Recombination-associated protein RdgC (302 aa).

This sequence belongs to the RdgC family.

Its subcellular location is the cytoplasm. The protein resides in the nucleoid. Functionally, may be involved in recombination. This chain is Recombination-associated protein RdgC, found in Haemophilus influenzae (strain PittGG).